We begin with the raw amino-acid sequence, 62 residues long: DNA-directed RNA polymerase subunit Rpo10 (62 aa).

Zn(2+)-binding residues include Cys-6, Cys-9, Cys-43, and Cys-44.

The protein belongs to the archaeal Rpo10/eukaryotic RPB10 RNA polymerase subunit family. In terms of assembly, part of the RNA polymerase complex. The cofactor is Zn(2+).

Its subcellular location is the cytoplasm. The enzyme catalyses RNA(n) + a ribonucleoside 5'-triphosphate = RNA(n+1) + diphosphate. In terms of biological role, DNA-dependent RNA polymerase (RNAP) catalyzes the transcription of DNA into RNA using the four ribonucleoside triphosphates as substrates. The polypeptide is DNA-directed RNA polymerase subunit Rpo10 (Methanoregula boonei (strain DSM 21154 / JCM 14090 / 6A8)).